A 393-amino-acid polypeptide reads, in one-letter code: S-adenosylmethionine sensor upstream of mTORC1 (393 aa).

The interval 1 to 35 is disordered; sequence MDLRSSAETDPDLSENHPGSVPAELQSRKQEQEKL. Arg94 contacts S-adenosyl-L-methionine. Residues 118 to 141 are disordered; that stretch reads DEKSARHATAGNANTDTNAPPQLS. Low complexity predominate over residues 125–136; that stretch reads ATAGNANTDTNA. Positions 160, 178, 190, 191, and 232 each coordinate S-adenosyl-L-methionine. The segment at 362–393 is disordered; sequence ELPETPYDSDSGESQSSSAPFYELEDPILLQS.

The protein belongs to the BMT2/SAMTOR family. As to quaternary structure, interacts with the GATOR1 complex; interaction is disrupted when samtor binds S-adenosyl-L-methionine. Interacts with the KICSTOR complex; interaction is disrupted when bmt2/samtor binds S-adenosyl-L-methionine.

In terms of biological role, S-adenosyl-L-methionine-binding protein that acts as an inhibitor of mTORC1 signaling via interaction with the GATOR1 and KICSTOR complexes. Acts as a sensor of S-adenosyl-L-methionine to signal methionine sufficiency to mTORC1: in presence of methionine, binds S-adenosyl-L-methionine, leading to disrupt interaction with the GATOR1 and KICSTOR complexes and promote mTORC1 signaling. Upon methionine starvation, S-adenosyl-L-methionine levels are reduced, thereby promoting the association with GATOR1 and KICSTOR, leading to inhibit mTORC1 signaling. Probably also acts as a S-adenosyl-L-methionine-dependent methyltransferase. The sequence is that of S-adenosylmethionine sensor upstream of mTORC1 from Danio rerio (Zebrafish).